Here is a 265-residue protein sequence, read N- to C-terminus: MDNLTKVREYLKSYSRLDQAVGEIDEIEAQRDEKSNYELFQEDGVEEHTKPSYFQAADDSDTESEPEIEDNQGLYVPDPEAEQVEGFIQGPLDDYADEEVDVVFTSDWKQPELKSDEHGKTLRLTLPEGLSGEQKSQWLSTIKAVVQSAKYWNLAECTFEASREGVIMEERQMTPDVYKVTPVMNTHPSQSEAVSDVWSLSKTSMTFQPKKASLQPLTISLDELFSSRGEFISVGGNGRMSHKEAILLGLRYKKLYNQARVKYSL.

The interaction with N(0) stretch occupies residues 1-60 (MDNLTKVREYLKSYSRLDQAVGEIDEIEAQRDEKSNYELFQEDGVEEHTKPSYFQAADDS). Tyr14 is subject to Phosphotyrosine; by host. Positions 42–72 (EDGVEEHTKPSYFQAADDSDTESEPEIEDNQ) are disordered. The segment at 49 to 105 (TKPSYFQAADDSDTESEPEIEDNQGLYVPDPEAEQVEGFIQGPLDDYADEEVDVVFT) is interaction with the L polymerase. Acidic residues predominate over residues 58–70 (DDSDTESEPEIED). Residue Ser60 is modified to Phosphoserine; by host CK2. A Phosphothreonine; by host CK2 modification is found at Thr62. Ser64 is modified (phosphoserine; by host CK2). Positions 109–170 (KQPELKSDEH…ASREGVIMEE (62 aa)) are oligomerization. The tract at residues 171–193 (RQMTPDVYKVTPVMNTHPSQSEA) is hinge. Phosphoserine; by host occurs at positions 226 and 227. Phosphoserine is present on Ser233. The interval 245–265 (AILLGLRYKKLYNQARVKYSL) is interaction with the Nucleoprotein-RNA and template-binding.

It belongs to the vesiculovirus protein P family. As to quaternary structure, homodimer. Interacts with the L polymerase; the association of P and L forms the polymerase complex and positions P optimally for encapsidation of newly synthesized genomes with the nucleoprotein. Interacts (via N-terminus) with N(0). Interacts (via C-terminus) with N in ribonucleocapsid (via C-terminus); this interaction allows to package the L polymerase in the virion and positions the polymerase on the template, since P acts as a bridge between N and L. Post-translationally, phosphorylated in the N-terminus by host CK2. Phosphorylation of the phosphoprotein is required for the transcriptional function of the P-L complex.

The protein resides in the virion. The protein localises to the host cytoplasm. Nonenzymatic cofactor regulating the function and conformation of the RNA polymerase and part of the transcription and replication complex. Binds the viral ribonucleocapsid and positions the L polymerase on the template. Acts as a chaperone for newly synthesized free N protein, so-called N(0). Plays a role in virion assembly. The protein is Phosphoprotein (P) of Vesicular stomatitis Indiana virus (strain 98COE North America) (VSIV).